We begin with the raw amino-acid sequence, 101 residues long: Urease subunit beta (101 aa).

The protein belongs to the urease beta subunit family. As to quaternary structure, heterotrimer of UreA (gamma), UreB (beta) and UreC (alpha) subunits. Three heterotrimers associate to form the active enzyme.

It localises to the cytoplasm. The catalysed reaction is urea + 2 H2O + H(+) = hydrogencarbonate + 2 NH4(+). The protein operates within nitrogen metabolism; urea degradation; CO(2) and NH(3) from urea (urease route): step 1/1. In Actinobacillus pleuropneumoniae serotype 7 (strain AP76), this protein is Urease subunit beta.